The following is a 198-amino-acid chain: Recombination protein RecR (198 aa).

Residues 56 to 71 form a C4-type zinc finger; that stretch reads CDTCGNVDTQNPCGIC. The 96-residue stretch at 79-174 folds into the Toprim domain; the sequence is KSICVVEDVA…RITQLAHGLP (96 aa).

It belongs to the RecR family.

In terms of biological role, may play a role in DNA repair. It seems to be involved in an RecBC-independent recombinational process of DNA repair. It may act with RecF and RecO. The polypeptide is Recombination protein RecR (Erythrobacter litoralis (strain HTCC2594)).